A 199-amino-acid chain; its full sequence is Ribonuclease P protein subunit p25 (199 aa).

The segment covering methionine 1–glutamate 11 has biased composition (basic and acidic residues). Disordered regions lie at residues methionine 1–leucine 31 and proline 146–alanine 199. Position 172 is a phosphoserine (serine 172). The segment covering proline 190–alanine 199 has biased composition (acidic residues).

This sequence belongs to the histone-like Alba family. In terms of assembly, component of nuclear RNase P and RNase MRP ribonucleoproteins. RNase P consists of a catalytic RNA moiety and 10 different protein chains; POP1, POP4, POP5, POP7, RPP14, RPP21, RPP25, RPP30, RPP38 and RPP40. Within the RNase P complex, POP1, POP7 and RPP25 form the 'finger' subcomplex, POP5, RPP14, RPP40 and homodimeric RPP30 form the 'palm' subcomplex, and RPP21, POP4 and RPP38 form the 'wrist' subcomplex. All subunits of the RNase P complex interact with the catalytic RNA. Several subunits of RNase P are also part of the RNase MRP complex. RNase MRP consists of a catalytic RNA moiety and about 8 protein subunits; POP1, POP7, RPP25, RPP30, RPP38, RPP40 and possibly also POP4 and POP5. POP7 forms a heterodimer with RPP25 that binds to the P3 stem loop of the catalytic RNA.

Its subcellular location is the nucleus. The protein localises to the nucleolus. In terms of biological role, component of ribonuclease P, a ribonucleoprotein complex that generates mature tRNA molecules by cleaving their 5'-ends. Also a component of the MRP ribonuclease complex, which cleaves pre-rRNA sequences. The chain is Ribonuclease P protein subunit p25 (Rpp25) from Mus musculus (Mouse).